Here is a 418-residue protein sequence, read N- to C-terminus: Putative competence-damage inducible protein (418 aa).

The protein belongs to the CinA family.

The sequence is that of Putative competence-damage inducible protein from Streptococcus gordonii (strain Challis / ATCC 35105 / BCRC 15272 / CH1 / DL1 / V288).